Reading from the N-terminus, the 389-residue chain is Probable DNA double-strand break repair nuclease NurA (389 aa).

Residues Asp-74 and Asp-151 each contribute to the Mn(2+) site.

Belongs to the NurA family. Mn(2+) serves as cofactor.

Functionally, involved in DNA double-strand break (DSB) repair. Probably acts with HerA to stimulate resection of the 5' strand and produce the long 3' single-strand that is required for RadA loading. This is Probable DNA double-strand break repair nuclease NurA from Methanocaldococcus jannaschii (strain ATCC 43067 / DSM 2661 / JAL-1 / JCM 10045 / NBRC 100440) (Methanococcus jannaschii).